The chain runs to 58 residues: PIEVNDDCMACEACVEICPDVFEMNEEGDKAVVINPDSDLDCVEEAIDSCPAEAIVRS.

4Fe-4S ferredoxin-type domains are found at residues 2–27 and 30–58; these read IEVN…MNEE and KAVV…IVRS. [3Fe-4S] cluster is bound at residue Cys-8. Position 11 is a cysteine methyl disulfide (Cys-11). Residue Cys-14 participates in [3Fe-4S] cluster binding. A disulfide bond links Cys-18 and Cys-42. Cys-50 contributes to the [3Fe-4S] cluster binding site.

In terms of assembly, homodimer (ferredoxin I) or homotetramer (ferredoxin II). [3Fe-4S] cluster is required as a cofactor. [4Fe-4S] cluster serves as cofactor.

Its function is as follows. Ferredoxins are iron-sulfur proteins that transfer electrons in a wide variety of metabolic reactions. In Megalodesulfovibrio gigas (Desulfovibrio gigas), this protein is Ferredoxin-2.